We begin with the raw amino-acid sequence, 1091 residues long: ATP-dependent helicase/deoxyribonuclease subunit B (1091 aa).

The protein belongs to the helicase family. AddB/RexB type 2 subfamily. Heterodimer of AddA and RexB. Mg(2+) is required as a cofactor.

Its function is as follows. The heterodimer acts as both an ATP-dependent DNA helicase and an ATP-dependent, dual-direction single-stranded exonuclease. Recognizes the chi site generating a DNA molecule suitable for the initiation of homologous recombination. This subunit has 5' -&gt; 3' nuclease activity but not helicase activity. The polypeptide is ATP-dependent helicase/deoxyribonuclease subunit B (Streptococcus pneumoniae (strain ATCC 700669 / Spain 23F-1)).